A 322-amino-acid chain; its full sequence is Exosome complex component RRP4 homolog (322 aa).

One can recognise an S1 motif domain in the interval 94 to 172; it reads GDIVVGRVIE…HDGSLQLQAR (79 aa). The KH domain occupies 182–237; that stretch reads GQLLKVDPYLVKRSKHHFHYVESLGIDLIIGCNGFIWVGEHVEVRDPMAIDDQKDE.

This sequence belongs to the RRP4 family. Component of the RNA exosome complex. Interacts with RPP41. Expressed in roots, stems, rosette and cauline leaves, flowers and siliques.

It localises to the cytoplasm. It is found in the nucleus. The protein localises to the nucleolus. In terms of biological role, non-catalytic component of the RNA exosome complex which has 3'-&gt;5' exoribonuclease activity and participates in a multitude of cellular RNA processing, maturation and degradation events. In vitro, is an active and distributive 3'-&gt;5' exonuclease requiring a free 3'-OH on the substrate and releasing nucleoside 5'-monophosphates. Required for normal embryo development. This is Exosome complex component RRP4 homolog from Arabidopsis thaliana (Mouse-ear cress).